Consider the following 62-residue polypeptide: UPF0434 protein RSc2531 (62 aa).

It belongs to the UPF0434 family.

The chain is UPF0434 protein RSc2531 from Ralstonia nicotianae (strain ATCC BAA-1114 / GMI1000) (Ralstonia solanacearum).